Reading from the N-terminus, the 391-residue chain is 8-amino-7-oxononanoate synthase 1 (391 aa).

108-109 (GF) contacts pyridoxal 5'-phosphate. His-133 lines the substrate pocket. Residues Ser-180, 205-208 (DDAH), and 236-239 (TLSK) contribute to the pyridoxal 5'-phosphate site. Lys-239 is subject to N6-(pyridoxal phosphate)lysine. A substrate-binding site is contributed by Thr-353.

This sequence belongs to the class-II pyridoxal-phosphate-dependent aminotransferase family. BioF subfamily. As to quaternary structure, homodimer. The cofactor is pyridoxal 5'-phosphate.

The catalysed reaction is 6-carboxyhexanoyl-[ACP] + L-alanine + H(+) = (8S)-8-amino-7-oxononanoate + holo-[ACP] + CO2. Its pathway is cofactor biosynthesis; biotin biosynthesis. Functionally, catalyzes the decarboxylative condensation of pimeloyl-[acyl-carrier protein] and L-alanine to produce 8-amino-7-oxononanoate (AON), [acyl-carrier protein], and carbon dioxide. The chain is 8-amino-7-oxononanoate synthase 1 from Bacillus velezensis (strain DSM 23117 / BGSC 10A6 / LMG 26770 / FZB42) (Bacillus amyloliquefaciens subsp. plantarum).